The sequence spans 263 residues: tRNA (guanine-N(1)-)-methyltransferase (263 aa).

S-adenosyl-L-methionine is bound by residues Gly-113 and 137 to 142 (LGDYVL).

The protein belongs to the RNA methyltransferase TrmD family. Homodimer.

It localises to the cytoplasm. The enzyme catalyses guanosine(37) in tRNA + S-adenosyl-L-methionine = N(1)-methylguanosine(37) in tRNA + S-adenosyl-L-homocysteine + H(+). Its function is as follows. Specifically methylates guanosine-37 in various tRNAs. The protein is tRNA (guanine-N(1)-)-methyltransferase of Renibacterium salmoninarum (strain ATCC 33209 / DSM 20767 / JCM 11484 / NBRC 15589 / NCIMB 2235).